Reading from the N-terminus, the 274-residue chain is Large ribosomal subunit protein uL2 (274 aa).

Positions 223–265 are disordered; the sequence is VVMNPVDHPHGGGEGRTSGGRHPVSPWGVPTKGYKTRSNKRTD.

This sequence belongs to the universal ribosomal protein uL2 family. As to quaternary structure, part of the 50S ribosomal subunit. Forms a bridge to the 30S subunit in the 70S ribosome.

Its function is as follows. One of the primary rRNA binding proteins. Required for association of the 30S and 50S subunits to form the 70S ribosome, for tRNA binding and peptide bond formation. It has been suggested to have peptidyltransferase activity; this is somewhat controversial. Makes several contacts with the 16S rRNA in the 70S ribosome. The chain is Large ribosomal subunit protein uL2 from Vibrio vulnificus (strain CMCP6).